A 602-amino-acid polypeptide reads, in one-letter code: Potassium-transporting ATPase potassium-binding subunit (602 aa).

The next 10 membrane-spanning stretches (helical) occupy residues 3–23 (ANNLLQAAIFIVVLIAAAVPV), 64–84 (QYALATVAFNALGVLFLYALL), 135–155 (GLTVQNFLSAATGIVVVLALI), 178–198 (LYVLVPMAAIIAALLMSQGVI), 282–302 (FSNFLEIFAILIIPAALCLVF), 313–333 (VAVLAAMTVALAAAIGIETSA), 418–438 (GLYGMLVFALLAVFVAGLMIG), 456–476 (VSIVVLLTPLLVLVGTSIAVL), 522–542 (WMTAIAMWFGRFGTIVPVLAI), and 565–585 (LFVVLLLGTVLLVGALTYMPA).

The protein belongs to the KdpA family. In terms of assembly, the system is composed of three essential subunits: KdpA, KdpB and KdpC.

It is found in the cell inner membrane. Part of the high-affinity ATP-driven potassium transport (or Kdp) system, which catalyzes the hydrolysis of ATP coupled with the electrogenic transport of potassium into the cytoplasm. This subunit binds the periplasmic potassium ions and delivers the ions to the membrane domain of KdpB through an intramembrane tunnel. This Burkholderia pseudomallei (strain K96243) protein is Potassium-transporting ATPase potassium-binding subunit.